We begin with the raw amino-acid sequence, 166 residues long: Phosphopantetheine adenylyltransferase (166 aa).

Ser11 serves as a coordination point for substrate. Residues 11 to 12 (SF) and His19 contribute to the ATP site. Positions 43, 76, and 90 each coordinate substrate. Residues 91–93 (GLR), Glu101, and 126–132 (YRYFSSS) each bind ATP.

It belongs to the bacterial CoaD family. In terms of assembly, homohexamer. The cofactor is Mg(2+).

It localises to the cytoplasm. The enzyme catalyses (R)-4'-phosphopantetheine + ATP + H(+) = 3'-dephospho-CoA + diphosphate. Its pathway is cofactor biosynthesis; coenzyme A biosynthesis; CoA from (R)-pantothenate: step 4/5. Reversibly transfers an adenylyl group from ATP to 4'-phosphopantetheine, yielding dephospho-CoA (dPCoA) and pyrophosphate. The protein is Phosphopantetheine adenylyltransferase of Streptococcus mutans serotype c (strain ATCC 700610 / UA159).